The sequence spans 542 residues: Membrane protein insertase YidC (542 aa).

6 consecutive transmembrane segments (helical) span residues 6–26 (NILL…WQTD), 326–346 (LVVD…LLMF), 350–370 (FVGN…GMLY), 421–441 (GGCL…WVLL), 458–478 (LSVQ…MFLM), and 501–521 (VIFT…WLVG).

The protein belongs to the OXA1/ALB3/YidC family. Type 1 subfamily. As to quaternary structure, interacts with the Sec translocase complex via SecD. Specifically interacts with transmembrane segments of nascent integral membrane proteins during membrane integration.

It localises to the cell inner membrane. Its function is as follows. Required for the insertion and/or proper folding and/or complex formation of integral membrane proteins into the membrane. Involved in integration of membrane proteins that insert both dependently and independently of the Sec translocase complex, as well as at least some lipoproteins. Aids folding of multispanning membrane proteins. This is Membrane protein insertase YidC from Shewanella loihica (strain ATCC BAA-1088 / PV-4).